The chain runs to 594 residues: Isocitrate dehydrogenase kinase/phosphatase (594 aa).

ATP contacts are provided by residues Ala315 to Met321 and Lys336. Residue Asp371 is part of the active site.

This sequence belongs to the AceK family.

The protein resides in the cytoplasm. The enzyme catalyses L-seryl-[isocitrate dehydrogenase] + ATP = O-phospho-L-seryl-[isocitrate dehydrogenase] + ADP + H(+). Bifunctional enzyme which can phosphorylate or dephosphorylate isocitrate dehydrogenase (IDH) on a specific serine residue. This is a regulatory mechanism which enables bacteria to bypass the Krebs cycle via the glyoxylate shunt in response to the source of carbon. When bacteria are grown on glucose, IDH is fully active and unphosphorylated, but when grown on acetate or ethanol, the activity of IDH declines drastically concomitant with its phosphorylation. The sequence is that of Isocitrate dehydrogenase kinase/phosphatase from Klebsiella pneumoniae subsp. pneumoniae (strain ATCC 700721 / MGH 78578).